We begin with the raw amino-acid sequence, 221 residues long: Phosphoribosylformylglycinamidine synthase subunit PurQ (221 aa).

A Glutamine amidotransferase type-1 domain is found at 6–221; it reads VGVVVFPGSN…LFTLKSLILK (216 aa). C89 acts as the Nucleophile in catalysis. Active-site residues include H197 and E199.

As to quaternary structure, part of the FGAM synthase complex composed of 1 PurL, 1 PurQ and 2 PurS subunits.

Its subcellular location is the cytoplasm. The catalysed reaction is N(2)-formyl-N(1)-(5-phospho-beta-D-ribosyl)glycinamide + L-glutamine + ATP + H2O = 2-formamido-N(1)-(5-O-phospho-beta-D-ribosyl)acetamidine + L-glutamate + ADP + phosphate + H(+). It carries out the reaction L-glutamine + H2O = L-glutamate + NH4(+). It functions in the pathway purine metabolism; IMP biosynthesis via de novo pathway; 5-amino-1-(5-phospho-D-ribosyl)imidazole from N(2)-formyl-N(1)-(5-phospho-D-ribosyl)glycinamide: step 1/2. Its function is as follows. Part of the phosphoribosylformylglycinamidine synthase complex involved in the purines biosynthetic pathway. Catalyzes the ATP-dependent conversion of formylglycinamide ribonucleotide (FGAR) and glutamine to yield formylglycinamidine ribonucleotide (FGAM) and glutamate. The FGAM synthase complex is composed of three subunits. PurQ produces an ammonia molecule by converting glutamine to glutamate. PurL transfers the ammonia molecule to FGAR to form FGAM in an ATP-dependent manner. PurS interacts with PurQ and PurL and is thought to assist in the transfer of the ammonia molecule from PurQ to PurL. The sequence is that of Phosphoribosylformylglycinamidine synthase subunit PurQ from Prochlorococcus marinus (strain MIT 9312).